The primary structure comprises 245 residues: 1-(5-phosphoribosyl)-5-[(5-phosphoribosylamino)methylideneamino] imidazole-4-carboxamide isomerase (245 aa).

D8 functions as the Proton acceptor in the catalytic mechanism. The active-site Proton donor is the D129.

Belongs to the HisA/HisF family.

It is found in the cytoplasm. It catalyses the reaction 1-(5-phospho-beta-D-ribosyl)-5-[(5-phospho-beta-D-ribosylamino)methylideneamino]imidazole-4-carboxamide = 5-[(5-phospho-1-deoxy-D-ribulos-1-ylimino)methylamino]-1-(5-phospho-beta-D-ribosyl)imidazole-4-carboxamide. It functions in the pathway amino-acid biosynthesis; L-histidine biosynthesis; L-histidine from 5-phospho-alpha-D-ribose 1-diphosphate: step 4/9. The sequence is that of 1-(5-phosphoribosyl)-5-[(5-phosphoribosylamino)methylideneamino] imidazole-4-carboxamide isomerase from Rhodopseudomonas palustris (strain ATCC BAA-98 / CGA009).